A 143-amino-acid polypeptide reads, in one-letter code: Transcriptional regulator MraZ (143 aa).

SpoVT-AbrB domains lie at 5–47 (EFDH…TLEE) and 76–119 (AVEV…DRET).

It belongs to the MraZ family. Forms oligomers.

The protein resides in the cytoplasm. The protein localises to the nucleoid. This is Transcriptional regulator MraZ from Staphylococcus epidermidis (strain ATCC 35984 / DSM 28319 / BCRC 17069 / CCUG 31568 / BM 3577 / RP62A).